The primary structure comprises 101 residues: NAD(P)H-quinone oxidoreductase subunit 4L, chloroplastic (101 aa).

The next 3 membrane-spanning stretches (helical) occupy residues 2–22 (MFERVLFLSVYLFSIGIYGLI), 32–52 (ICLELILNSINLNLVTFSDLF), and 61–81 (IFAIFVIALAAAEAAIGLSIL).

It belongs to the complex I subunit 4L family. As to quaternary structure, NDH is composed of at least 16 different subunits, 5 of which are encoded in the nucleus.

It is found in the plastid. The protein resides in the chloroplast thylakoid membrane. It catalyses the reaction a plastoquinone + NADH + (n+1) H(+)(in) = a plastoquinol + NAD(+) + n H(+)(out). The enzyme catalyses a plastoquinone + NADPH + (n+1) H(+)(in) = a plastoquinol + NADP(+) + n H(+)(out). NDH shuttles electrons from NAD(P)H:plastoquinone, via FMN and iron-sulfur (Fe-S) centers, to quinones in the photosynthetic chain and possibly in a chloroplast respiratory chain. The immediate electron acceptor for the enzyme in this species is believed to be plastoquinone. Couples the redox reaction to proton translocation, and thus conserves the redox energy in a proton gradient. The sequence is that of NAD(P)H-quinone oxidoreductase subunit 4L, chloroplastic from Zea mays (Maize).